The primary structure comprises 237 residues: tRNA (guanine-N(7)-)-methyltransferase (237 aa).

The tract at residues 1 to 24 is disordered; sequence MTAHKPGDPTTLNRLYGRSKGKPL. S-adenosyl-L-methionine contacts are provided by E62, E87, D119, and D141. The active site involves D141. Residues K145, D177, and 216–219 contribute to the substrate site; that span reads TRYE.

This sequence belongs to the class I-like SAM-binding methyltransferase superfamily. TrmB family.

The enzyme catalyses guanosine(46) in tRNA + S-adenosyl-L-methionine = N(7)-methylguanosine(46) in tRNA + S-adenosyl-L-homocysteine. Its pathway is tRNA modification; N(7)-methylguanine-tRNA biosynthesis. Catalyzes the formation of N(7)-methylguanine at position 46 (m7G46) in tRNA. This is tRNA (guanine-N(7)-)-methyltransferase from Sphingopyxis alaskensis (strain DSM 13593 / LMG 18877 / RB2256) (Sphingomonas alaskensis).